Consider the following 329-residue polypeptide: MTSSNGDNKGLVVSFGEMLIDFVPTESGVSLSESSGFLKAPGGAPANVAIAVSRLGGRAAFVGKLGDDEFGHMLAGILRKNDVDDQGINFDKGARTALAFVTLRSDGEREFMFYRNPSADMLLRPDELNLELIRSAKVFHYGSISLITEPCRSAHMKAMEVAKEAGALLSYDPNLREPLWPSPEEARKQIMSIWDKADIIKVSDVELEFLTGNKTIDDETAMSLWHPNLKLLLVTLGENGCRYYTKDFHGSVETFHVDAVDTTGAGDSFVGALLNQIVDDQSVLEEEERLRKVLRFANACGAITTTKKGAIPALPTDCEALSFLKIQVE.

This sequence belongs to the carbohydrate kinase PfkB family.

It carries out the reaction D-fructose + ATP = D-fructose 6-phosphate + ADP + H(+). It functions in the pathway glycan biosynthesis; starch biosynthesis. In terms of biological role, may play an important role in maintaining the flux of carbon towards starch formation. This Arabidopsis thaliana (Mouse-ear cress) protein is Probable fructokinase-2.